The primary structure comprises 154 residues: Putative glutamine amidotransferase-like protein RP712 (154 aa).

Residues 1-94 (MSIEKEKFWA…QQSVWSFHNK (94 aa)) enclose the Glutamine amidotransferase type-1 domain.

The sequence is that of Putative glutamine amidotransferase-like protein RP712 from Rickettsia prowazekii (strain Madrid E).